Consider the following 363-residue polypeptide: DNA replication and repair protein RecF (363 aa).

31-38 contributes to the ATP binding site; that stretch reads GANSSGKT.

Belongs to the RecF family.

Its subcellular location is the cytoplasm. The RecF protein is involved in DNA metabolism; it is required for DNA replication and normal SOS inducibility. RecF binds preferentially to single-stranded, linear DNA. It also seems to bind ATP. This Nitrosococcus oceani (strain ATCC 19707 / BCRC 17464 / JCM 30415 / NCIMB 11848 / C-107) protein is DNA replication and repair protein RecF.